Here is a 160-residue protein sequence, read N- to C-terminus: uncharacterized protein (160 aa).

Y49 is modified (phosphotyrosine).

Functionally, may be involved in the assembly, structure, or function of the flagellum. May polymerize to form a filamentous structure that is part of the flagellum. This is an uncharacterized protein from Bacillus subtilis (strain 168).